A 691-amino-acid chain; its full sequence is Tumor necrosis factor alpha-induced protein 2 (691 aa).

Positions 9–111 (QGFPGQQSVP…KPRPELDGPL (103 aa)) are disordered. The span at 12 to 31 (PGQQSVPGTLNFAVSPQKPR) shows a compositional bias: polar residues. Residues 33 to 45 (TSEAESETSMSEA) are compositionally biased toward low complexity. The segment covering 91–107 (QPRLSDLEVQPKPRPEL) has biased composition (basic and acidic residues).

This sequence belongs to the SEC6 family.

May play a role as a mediator of inflammation and angiogenesis. This chain is Tumor necrosis factor alpha-induced protein 2 (Tnfaip2), found in Mus musculus (Mouse).